The sequence spans 330 residues: Beta-ketoacyl-[acyl-carrier-protein] synthase III (330 aa).

Active-site residues include C114 and H255. Residues 256-260 (QANQR) are ACP-binding. N285 is a catalytic residue.

The protein belongs to the thiolase-like superfamily. FabH family. As to quaternary structure, homodimer.

It localises to the cytoplasm. It catalyses the reaction malonyl-[ACP] + acetyl-CoA + H(+) = 3-oxobutanoyl-[ACP] + CO2 + CoA. It functions in the pathway lipid metabolism; fatty acid biosynthesis. Functionally, catalyzes the condensation reaction of fatty acid synthesis by the addition to an acyl acceptor of two carbons from malonyl-ACP. Catalyzes the first condensation reaction which initiates fatty acid synthesis and may therefore play a role in governing the total rate of fatty acid production. Possesses both acetoacetyl-ACP synthase and acetyl transacylase activities. Its substrate specificity determines the biosynthesis of branched-chain and/or straight-chain of fatty acids. The polypeptide is Beta-ketoacyl-[acyl-carrier-protein] synthase III (Trichormus variabilis (strain ATCC 29413 / PCC 7937) (Anabaena variabilis)).